The following is a 103-amino-acid chain: c-Myc-binding protein (103 aa).

The protein belongs to the AMY1 family. Binds via its C-terminal region to the N-terminal region of MYC. Associates with AKAP1/S-AKAP84. Interacts with MYCBPAP. Interacts with CFAP91. As to expression, highly expressed in heart, placenta, pancreas, skeletal muscle and kidney. Also present at low levels in lung.

The protein resides in the cytoplasm. The protein localises to the nucleus. It localises to the mitochondrion. In terms of biological role, may control the transcriptional activity of MYC. Stimulates the activation of E box-dependent transcription by MYC. In Homo sapiens (Human), this protein is c-Myc-binding protein.